The sequence spans 508 residues: Cytochrome P450 monooxygenase tenA (508 aa).

Residues 8–24 (VSLPYLILSACLSVILL) form a helical membrane-spanning segment. Position 456 (C456) interacts with heme.

Belongs to the cytochrome P450 family. Heme is required as a cofactor.

The protein localises to the membrane. Its pathway is secondary metabolite biosynthesis. Its function is as follows. Cytochrome P450 monooxygenase; part of the gene cluster that mediates the biosynthesis of tenellin-type 2-pyridones, iron-chelating compounds involved in iron stress tolerance, competition with the natural competitor fungus Metarhizium robertsii and insect hosts infection. TenA catalyzes an oxidative ring expansion of pretenellin A and 14-hydropretellenin A to form the 2-pyridone core, leading to the production of pretenellin B and pyridovericin, respectively. The pathway begins with the assembly of the polyketide-amino acid backbone by the hybrid PKS-NRPS tenS with the help of the enoyl reductase tenC. These enzymes catalyze the synthesis of the pyrrolidine-2-dione intermediates pretellinin A, 11-hydropretellenin A, 12-hydropretellenin A, 13-hydropretellenin A, 14-hydropretellenin A, 12-oxopretellenin A and prototellinin D. The cytochrome P450 monooxygenase tenA then catalyzes an oxidative ring expansion of pretenellin A and 14-hydropretellenin A to form the 2-pyridone core, leading to pretenellin B and pyridovericin, respectively. The cytochrome P450 monooxygenase tenB is then required for the selective N-hydroxylation of the 2-pyridone nitrogen of yield tellinin and 15-hydroxytellenin (15-HT), respectively. The UDP-glucosyltransferase GT1 and the methyltransferase MT1, located outside the tenS gene cluster, contribute to the stepwise glycosylation and methylation of 15-HT to obtain the glycoside pyridovericin-N-O-(4-O-methyl-beta-D-glucopyranoside) (PMGP). Additional related compounds such as 1-O-methyl-15-HT, (8Z)-1-O-methyl-15-HT, and O-methyltenellin A are also produced but the enzymes involved in their biosynthesis have still to be determined. This is Cytochrome P450 monooxygenase tenA from Beauveria bassiana (White muscardine disease fungus).